The sequence spans 385 residues: Probable dual-specificity RNA methyltransferase RlmN (385 aa).

The interval 1–24 (MTATTAESGNLLPLVSGRSRPPRH) is disordered. Catalysis depends on E114, which acts as the Proton acceptor. In terms of domain architecture, Radical SAM core spans 120–364 (YPQRATVCVS…AATVRDTRGR (245 aa)). Residues C127 and C370 are joined by a disulfide bond. The [4Fe-4S] cluster site is built by C134, C138, and C141. Residues 194–195 (GE), S228, 251–253 (SLH), and N327 each bind S-adenosyl-L-methionine. Catalysis depends on C370, which acts as the S-methylcysteine intermediate.

Belongs to the radical SAM superfamily. RlmN family. [4Fe-4S] cluster serves as cofactor.

The protein localises to the cytoplasm. The catalysed reaction is adenosine(2503) in 23S rRNA + 2 reduced [2Fe-2S]-[ferredoxin] + 2 S-adenosyl-L-methionine = 2-methyladenosine(2503) in 23S rRNA + 5'-deoxyadenosine + L-methionine + 2 oxidized [2Fe-2S]-[ferredoxin] + S-adenosyl-L-homocysteine. It catalyses the reaction adenosine(37) in tRNA + 2 reduced [2Fe-2S]-[ferredoxin] + 2 S-adenosyl-L-methionine = 2-methyladenosine(37) in tRNA + 5'-deoxyadenosine + L-methionine + 2 oxidized [2Fe-2S]-[ferredoxin] + S-adenosyl-L-homocysteine. In terms of biological role, specifically methylates position 2 of adenine 2503 in 23S rRNA and position 2 of adenine 37 in tRNAs. The sequence is that of Probable dual-specificity RNA methyltransferase RlmN from Parafrankia sp. (strain EAN1pec).